The chain runs to 1856 residues: MLKAVLKKSREGGKGSKKEAGGDFGSETPALSSSGDSPVNSLSTTEDTYRVSLAKGVSMSLPSSPLLPRQSLLTQSRSNKKSPGPVRKPKYVESPRVPGDPVMIPFGEGSKPSEPSATEAKADNEPSCSPAAQELLTRLGFLLGEGIPSATHITIEDKNEAMCTALSQGISPCSTLTSSTASPSTDSPCSTLNSCVSKTAASKSPCETISSPSSTLESKDSGIIATITSSSENDDRSGSSLEWNRDGSLRLGVQKGVLHDRRADNCSPVAEEETTGSAESVLPKAEPSAGDGPVPYPQSSGSLIMPRPNSVAATSSTKLEDLSYLDGQRNAPLRTSIRLPWHNTAGGRAPEVKARFAPYKPQEILLKPLLFEVPSITTDSVFVGRDWLFHQIEENLRNTELAENRGAVVVGSVGFGKTAIISKLVALSCHGSRMRQIASSSPSLSPKSSDPTQDLPGTPLLSPSSSTSALSVTRTPAGPGTADSQRPREDAVKYLASKVVAYHYCQADNTYTCLVPEFVHSIAALLCRSHQLAAYRDLLIKEPQLQSMLSLRSCVQDPVAAFKRGVLEPLTSLRNEQKIPEEEYIILIDGLNEAEFHKPDYGDTLSSFITKIIPKFPTWLKLIVTVRANFQEIISALPFVKLSLDDFPDNKDIHSDLHAYVQHRVHSSQDILSNISLNGKADAALISKVSSHLVLRSLGSYLYLKLTLDLFQRGHLVIKSASYKVVPVSLSELYLLQCNMKFMTQSAFDRALPILNVALASLHPMTDEQIFQAINAGHIQGEQGWEDFQQRMEALSCFLIKRRDKTRMFCHPSFREWLVWRADGESTAFLCEPRNGHALLAFMFSRQESKLNRQQTMELGHHILKAHIFKGLSKKTGVSSSHLQALWIGYSTEGLSAALASLRNLYTPNVKVSRLLILGGANVNYRTEVLNNAPILCVQSHLGHEEVVTLLLEFGACLDGMSENGMNALCYAAAAGHMKLVCLLIKKGARVDHLDKKGQCALVHSALRGHSDILQYLLNCEWSAGPPQPGTLRKSQALQQALTAAASMGHSSVVQSLLGMAEEHEIEVNGTDTLWGETALTAAAGRGKVEICELLLERGAAVSRANRRGVPPLFCAARQGHWQVVRLLLDRGCDVNLSDKQGRTPLMVASCEGHLSTVEFLLSKGAALSSLDKEGLSALSWACLKGHRAVVQYLVEEGAEIDQTDKNGRTPLDLAAFYGDAETVLYLVEKGAVIEHVDHSGMRPLDRAIGCRNTAVVVTLLRKGAKLGNAAWAMATSKPDILIILLQKLVEEGNVMYKKGKMKEAAQRYQYALRKFPREGLGEDMRPFNELRVSLYLNLSRCRRKTNDFGLAEEFASKALELKPKSYEAFYARARAKRNSRQFLAALADLQEAVKLCPNNQEIKRLLARVEEECKQLQRNQQQKQQGPPPAPANDSDNEEDAPASSLKDHFPIEEAEEEDTSSQEESISPTPRSQPPPSVPSPYIRNLQEGLQSKGRSASPQSRAGISKSLRETVAQSGLVMQPTKQAQIVKTNQHLGSGQSSMRNSSTKIQVSSQNPPPSPMPGRVSAAPAVSRNQHLEGTGPFTAGTGCGHFGDRLGASQSLQLQRSESGTAYPLPSKVKAAERLLAHASVAVDMAPPNQGGPVSCSDVRHPASLSSSGSSGSPSSSIKMSSSTSSLTSSSSVSDGFKVQGPDSRIRDKGTTQVQGGTAEHRPRNTPFMGIMDKTARFQQQSNPPNRSWHCPVAEGLLTNTATAAGLQSNSEKPTLKPGGYCSQAKPCSVPPLSMGVHNGAQVKELEENKCQIPALCQDNRITKGVPHLYPEGVSKQPLHVSTEAHRSHLTSAKPKRSFIESNV.

The residue at position 1 (Met-1) is an N-acetylmethionine. Disordered stretches follow at residues 1-45, 58-130, 203-222, 262-296, and 437-489; these read MLKA…LSTT, SMSL…SCSP, KSPC…KDSG, RADN…PVPY, and IASS…RPRE. The span at 8–21 shows a compositional bias: basic and acidic residues; it reads KSREGGKGSKKEAG. Over residues 29–45 the composition is skewed to polar residues; sequence PALSSSGDSPVNSLSTT. Ser-60, Ser-63, Ser-64, Ser-204, Ser-267, and Ser-462 each carry phosphoserine. Over residues 60 to 77 the composition is skewed to low complexity; the sequence is SLPSSPLLPRQSLLTQSR. Positions 203–216 are enriched in polar residues; it reads KSPCETISSPSSTL. The span at 439 to 475 shows a compositional bias: low complexity; the sequence is SSSPSLSPKSSDPTQDLPGTPLLSPSSSTSALSVTRT. ANK repeat units follow at residues 893-925, 931-960, 964-993, 997-1026, 1037-1066, 1075-1104, 1108-1137, 1141-1170, 1174-1203, 1207-1236, and 1240-1269; these read EGLS…NVNY, NNAP…CLDG, NGMN…RVDH, KGQC…SAGP, ALQQ…EHEI, WGET…AVSR, RGVP…DVNL, QGRT…ALSS, EGLS…EIDQ, NGRT…VIEH, and SGMR…KLGN. TPR repeat units lie at residues 1286–1319, 1333–1366, and 1368–1400; these read LQKL…FPRE, VSLY…KPKS, and EAFY…CPNN. Residues 1417-1426 show a composition bias toward low complexity; the sequence is LQRNQQQKQQ. 3 disordered regions span residues 1417–1597, 1636–1720, and 1832–1856; these read LQRN…FGDR, DMAP…NTPF, and HVST…ESNV. A phosphoserine mark is found at Ser-1436 and Ser-1463. A compositionally biased stretch (acidic residues) spans 1454–1463; sequence EEAEEEDTSS. Composition is skewed to polar residues over residues 1490-1505 and 1524-1556; these read EGLQ…QSRA and PTKQ…VSSQ. Low complexity predominate over residues 1656–1686; that stretch reads SLSSSGSSGSPSSSIKMSSSTSSLTSSSSVS. Phosphoserine occurs at positions 1665, 1673, and 1674.

This sequence belongs to the TANC family. As to quaternary structure, interacts probably directly with DLG1, DLG4, HOMER1. Interacts with DLGAP1, INA, CAMK2A, GRIN2B and GRIA1. Interacts with TNIK and MINK1. Phosphorylated; by MINK1 and TNIK upon stimulation by RAP2A.

It is found in the postsynaptic density. Functionally, may be a scaffold component in the postsynaptic density. This chain is Protein TANC1 (Tanc1), found in Mus musculus (Mouse).